The primary structure comprises 401 residues: Probable 2,3-bisphosphoglycerate-independent phosphoglycerate mutase (401 aa).

Belongs to the BPG-independent phosphoglycerate mutase family. A-PGAM subfamily.

It catalyses the reaction (2R)-2-phosphoglycerate = (2R)-3-phosphoglycerate. It participates in carbohydrate degradation; glycolysis; pyruvate from D-glyceraldehyde 3-phosphate: step 3/5. In terms of biological role, catalyzes the interconversion of 2-phosphoglycerate and 3-phosphoglycerate. This is Probable 2,3-bisphosphoglycerate-independent phosphoglycerate mutase from Thermotoga neapolitana (strain ATCC 49049 / DSM 4359 / NBRC 107923 / NS-E).